The primary structure comprises 323 residues: rRNA 2'-O-methyltransferase fibrillarin (323 aa).

The segment at 1–80 is disordered; the sequence is MSFRPGSRGG…GARGGAKGGA (80 aa). The segment covering 7 to 78 has biased composition (gly residues); it reads SRGGARGGRG…RGGARGGAKG (72 aa). Arg-8, Arg-12, Arg-15, Arg-19, Arg-25, Arg-29, Arg-35, Arg-39, Arg-43, Arg-49, Arg-53, Arg-57, Arg-61, Arg-65, Arg-69, and Arg-73 each carry asymmetric dimethylarginine. Residues 175 to 176, 194 to 195, 219 to 220, and 239 to 242 each bind S-adenosyl-L-methionine; these read TS, EF, DA, and DVAQ.

It belongs to the methyltransferase superfamily. Fibrillarin family. In terms of assembly, component of box C/D small nucleolar ribonucleoprotein (snoRNP) particles that contain SNU13, NOP1, SIK1/NOP56 and NOP58, plus a guide RNA. Post-translationally, by homology to other fibrillarins, some or all of the N-terminal domain arginines are modified to asymmetric dimethylarginine (DMA).

The protein localises to the nucleus. Its subcellular location is the nucleolus. The enzyme catalyses L-glutaminyl-[histone H2A] + S-adenosyl-L-methionine = N(5)-methyl-L-glutaminyl-[histone H2A] + S-adenosyl-L-homocysteine + H(+). S-adenosyl-L-methionine-dependent methyltransferase that has the ability to methylate both RNAs and proteins. Involved in pre-rRNA processing. Utilizes the methyl donor S-adenosyl-L-methionine to catalyze the site-specific 2'-hydroxyl methylation of ribose moieties in pre-ribosomal RNA. Site specificity is provided by a guide RNA that base pairs with the substrate. Methylation occurs at a characteristic distance from the sequence involved in base pairing with the guide RNA. Also acts as a protein methyltransferase by mediating methylation of 'Gln-105' of histone H2A (H2AQ105me), a modification that impairs binding of the FACT complex and is specifically present at 35S ribosomal DNA locus. This Candida glabrata (strain ATCC 2001 / BCRC 20586 / JCM 3761 / NBRC 0622 / NRRL Y-65 / CBS 138) (Yeast) protein is rRNA 2'-O-methyltransferase fibrillarin (NOP1).